Reading from the N-terminus, the 492-residue chain is ATP synthase subunit beta, chloroplastic (492 aa).

Position 170–177 (glycine 170–threonine 177) interacts with ATP.

It belongs to the ATPase alpha/beta chains family. As to quaternary structure, F-type ATPases have 2 components, CF(1) - the catalytic core - and CF(0) - the membrane proton channel. CF(1) has five subunits: alpha(3), beta(3), gamma(1), delta(1), epsilon(1). CF(0) has four main subunits: a(1), b(1), b'(1) and c(9-12).

It localises to the plastid. The protein localises to the chloroplast thylakoid membrane. It carries out the reaction ATP + H2O + 4 H(+)(in) = ADP + phosphate + 5 H(+)(out). Functionally, produces ATP from ADP in the presence of a proton gradient across the membrane. The catalytic sites are hosted primarily by the beta subunits. This is ATP synthase subunit beta, chloroplastic from Huperzia lucidula (Shining clubmoss).